The sequence spans 642 residues: Threonine--tRNA ligase (642 aa).

The region spanning 1 to 61 (MPVITLPDGS…ENDATLAIIT (61 aa)) is the TGS domain. The segment at 243-534 (DHRKIGKQLD…LTEEFAGFFP (292 aa)) is catalytic. C334, H385, and H511 together coordinate Zn(2+).

The protein belongs to the class-II aminoacyl-tRNA synthetase family. Homodimer. Requires Zn(2+) as cofactor.

Its subcellular location is the cytoplasm. It carries out the reaction tRNA(Thr) + L-threonine + ATP = L-threonyl-tRNA(Thr) + AMP + diphosphate + H(+). Catalyzes the attachment of threonine to tRNA(Thr) in a two-step reaction: L-threonine is first activated by ATP to form Thr-AMP and then transferred to the acceptor end of tRNA(Thr). Also edits incorrectly charged L-seryl-tRNA(Thr). This chain is Threonine--tRNA ligase, found in Salmonella choleraesuis (strain SC-B67).